Reading from the N-terminus, the 405-residue chain is Diaminopimelate decarboxylase (405 aa).

At K46 the chain carries N6-(pyridoxal phosphate)lysine. Pyridoxal 5'-phosphate-binding positions include G225 and 259–262 (EPGR). R262, R298, and Y302 together coordinate substrate. Residue C329 is the Proton donor of the active site. Substrate is bound by residues E330 and Y358. Y358 provides a ligand contact to pyridoxal 5'-phosphate.

It belongs to the Orn/Lys/Arg decarboxylase class-II family. LysA subfamily. In terms of assembly, homodimer. It depends on pyridoxal 5'-phosphate as a cofactor.

It catalyses the reaction meso-2,6-diaminopimelate + H(+) = L-lysine + CO2. The protein operates within amino-acid biosynthesis; L-lysine biosynthesis via DAP pathway; L-lysine from DL-2,6-diaminopimelate: step 1/1. Specifically catalyzes the decarboxylation of meso-diaminopimelate (meso-DAP) to L-lysine. This is Diaminopimelate decarboxylase from Helicobacter pylori (Campylobacter pylori).